The sequence spans 97 residues: Aspartyl/glutamyl-tRNA(Asn/Gln) amidotransferase subunit C (97 aa).

Belongs to the GatC family. As to quaternary structure, heterotrimer of A, B and C subunits.

It catalyses the reaction L-glutamyl-tRNA(Gln) + L-glutamine + ATP + H2O = L-glutaminyl-tRNA(Gln) + L-glutamate + ADP + phosphate + H(+). The catalysed reaction is L-aspartyl-tRNA(Asn) + L-glutamine + ATP + H2O = L-asparaginyl-tRNA(Asn) + L-glutamate + ADP + phosphate + 2 H(+). Allows the formation of correctly charged Asn-tRNA(Asn) or Gln-tRNA(Gln) through the transamidation of misacylated Asp-tRNA(Asn) or Glu-tRNA(Gln) in organisms which lack either or both of asparaginyl-tRNA or glutaminyl-tRNA synthetases. The reaction takes place in the presence of glutamine and ATP through an activated phospho-Asp-tRNA(Asn) or phospho-Glu-tRNA(Gln). The sequence is that of Aspartyl/glutamyl-tRNA(Asn/Gln) amidotransferase subunit C from Prochlorococcus marinus (strain MIT 9303).